Reading from the N-terminus, the 125-residue chain is uncharacterized protein (125 aa).

Helical transmembrane passes span I9 to G29, G33 to V53, I56 to V76, and F100 to F120.

Its subcellular location is the cell membrane. This is an uncharacterized protein from Streptomyces coelicolor (strain ATCC BAA-471 / A3(2) / M145).